A 202-amino-acid chain; its full sequence is MRPGLQPSLGLTSSSLPDDALEVGRILDAWGVKGWVKILPHSTDPEALFSAKTWYLQTPDVKFRPGFSLFSGTVSLKVDEAKIHSGAVVAKFSGLDDRDAAEALRGARIFLSRSSFPAASADEYYWVDLIGLNVLNREGVALGCVRDLMATGPHSVLCVEYASTQEDGTSATAERMIPFVAAYVDKVDIAGKCITVDWQPDY.

Residues 121 to 202 (ADEYYWVDLI…CITVDWQPDY (82 aa)) enclose the PRC barrel domain.

It belongs to the RimM family. As to quaternary structure, binds ribosomal protein uS19.

Its subcellular location is the cytoplasm. An accessory protein needed during the final step in the assembly of 30S ribosomal subunit, possibly for assembly of the head region. Essential for efficient processing of 16S rRNA. May be needed both before and after RbfA during the maturation of 16S rRNA. It has affinity for free ribosomal 30S subunits but not for 70S ribosomes. The chain is Ribosome maturation factor RimM from Polaromonas naphthalenivorans (strain CJ2).